The sequence spans 355 residues: UDP-N-acetylglucosamine--N-acetylmuramyl-(pentapeptide) pyrophosphoryl-undecaprenol N-acetylglucosamine transferase (355 aa).

UDP-N-acetyl-alpha-D-glucosamine-binding positions include T12 to G14, N124, R163, S191, I243, A262 to E267, and Q288.

This sequence belongs to the glycosyltransferase 28 family. MurG subfamily.

It localises to the cell inner membrane. It catalyses the reaction di-trans,octa-cis-undecaprenyl diphospho-N-acetyl-alpha-D-muramoyl-L-alanyl-D-glutamyl-meso-2,6-diaminopimeloyl-D-alanyl-D-alanine + UDP-N-acetyl-alpha-D-glucosamine = di-trans,octa-cis-undecaprenyl diphospho-[N-acetyl-alpha-D-glucosaminyl-(1-&gt;4)]-N-acetyl-alpha-D-muramoyl-L-alanyl-D-glutamyl-meso-2,6-diaminopimeloyl-D-alanyl-D-alanine + UDP + H(+). The protein operates within cell wall biogenesis; peptidoglycan biosynthesis. Functionally, cell wall formation. Catalyzes the transfer of a GlcNAc subunit on undecaprenyl-pyrophosphoryl-MurNAc-pentapeptide (lipid intermediate I) to form undecaprenyl-pyrophosphoryl-MurNAc-(pentapeptide)GlcNAc (lipid intermediate II). The polypeptide is UDP-N-acetylglucosamine--N-acetylmuramyl-(pentapeptide) pyrophosphoryl-undecaprenol N-acetylglucosamine transferase (Tolumonas auensis (strain DSM 9187 / NBRC 110442 / TA 4)).